The sequence spans 332 residues: NADH-quinone oxidoreductase subunit H (332 aa).

Transmembrane regions (helical) follow at residues 8–28 (IIEC…LAGF), 44–66 (IGPN…KLFA), 78–98 (PIFI…MAPI), 120–140 (VGIL…LLAG), 157–177 (IQFL…LMII), 196–216 (WLIF…YVEL), 245–265 (MFFI…SLVF), 274–294 (FIPG…LFMW), and 312–332 (WKIM…ILLF).

It belongs to the complex I subunit 1 family. As to quaternary structure, NDH-1 is composed of 14 different subunits. Subunits NuoA, H, J, K, L, M, N constitute the membrane sector of the complex.

Its subcellular location is the cell inner membrane. The enzyme catalyses a quinone + NADH + 5 H(+)(in) = a quinol + NAD(+) + 4 H(+)(out). Its function is as follows. NDH-1 shuttles electrons from NADH, via FMN and iron-sulfur (Fe-S) centers, to quinones in the respiratory chain. The immediate electron acceptor for the enzyme in this species is believed to be ubiquinone. Couples the redox reaction to proton translocation (for every two electrons transferred, four hydrogen ions are translocated across the cytoplasmic membrane), and thus conserves the redox energy in a proton gradient. This subunit may bind ubiquinone. The chain is NADH-quinone oxidoreductase subunit H from Helicobacter hepaticus (strain ATCC 51449 / 3B1).